Reading from the N-terminus, the 234-residue chain is Large ribosomal subunit protein uL1 (234 aa).

It belongs to the universal ribosomal protein uL1 family. In terms of assembly, part of the 50S ribosomal subunit.

Its function is as follows. Binds directly to 23S rRNA. The L1 stalk is quite mobile in the ribosome, and is involved in E site tRNA release. In terms of biological role, protein L1 is also a translational repressor protein, it controls the translation of the L11 operon by binding to its mRNA. This is Large ribosomal subunit protein uL1 from Syntrophobacter fumaroxidans (strain DSM 10017 / MPOB).